Consider the following 235-residue polypeptide: Riboflavin kinase (235 aa).

2 residues coordinate Mg(2+): T45 and N47. The Nucleophile role is filled by E140.

The protein belongs to the flavokinase family. Zn(2+) is required as a cofactor. The cofactor is Mg(2+).

It carries out the reaction riboflavin + ATP = FMN + ADP + H(+). The protein operates within cofactor biosynthesis; FMN biosynthesis; FMN from riboflavin (ATP route): step 1/1. Functionally, catalyzes the phosphorylation of riboflavin (vitamin B2) to form flavin mononucleotide (FMN) coenzyme. The protein is Riboflavin kinase (FMN1) of Chaetomium globosum (strain ATCC 6205 / CBS 148.51 / DSM 1962 / NBRC 6347 / NRRL 1970) (Soil fungus).